Reading from the N-terminus, the 392-residue chain is MMLLLAQWLQGMSSELGFLRVFQYLTMRAVLAALTALLIGLAAGSWVIGKLMALKIGQPIRGYAPQSHLSKSGTPTMGGVLILLSIALSTLLWFDLSNRFVWIVLLVTLGFGAIGWVDDWRKVVDKNPEGMRSREKYLWQSLIGLMAALYLVFCISENSNAKVLELFISWMRSGFALDLPPKAGLQLPFFKAVSYPLGVLGFVLLTYLVIVGSSNAVNLTDGLDGLAIMPVVMVGSALGVFAYVTGSAVYSRYLFFPHIPGSGELLIFCAAMAGAGLAFLWFNAHPAQVFMGDVGALALGAALGTIAIIVRQEIVLAVMGGIFVAEALSVMLQVGWFKYTRYRYGEGRRLLKMAPLHHHFEKSGWKETQVVVRFWIITMLLCLVGLSTLKLR.

10 consecutive transmembrane segments (helical) span residues 29 to 49, 76 to 96, 100 to 120, 137 to 157, 192 to 212, 225 to 245, 262 to 282, 289 to 309, 314 to 334, and 369 to 389; these read AVLA…WVIG, TMGG…WFDL, FVWI…VDDW, YLWQ…CISE, AVSY…VIVG, GLAI…AYVT, SGEL…FLWF, VFMG…IAII, IVLA…MLQV, and QVVV…LSTL.

This sequence belongs to the glycosyltransferase 4 family. MraY subfamily. The cofactor is Mg(2+).

It localises to the cell inner membrane. It carries out the reaction UDP-N-acetyl-alpha-D-muramoyl-L-alanyl-gamma-D-glutamyl-meso-2,6-diaminopimeloyl-D-alanyl-D-alanine + di-trans,octa-cis-undecaprenyl phosphate = di-trans,octa-cis-undecaprenyl diphospho-N-acetyl-alpha-D-muramoyl-L-alanyl-D-glutamyl-meso-2,6-diaminopimeloyl-D-alanyl-D-alanine + UMP. It participates in cell wall biogenesis; peptidoglycan biosynthesis. In terms of biological role, catalyzes the initial step of the lipid cycle reactions in the biosynthesis of the cell wall peptidoglycan: transfers peptidoglycan precursor phospho-MurNAc-pentapeptide from UDP-MurNAc-pentapeptide onto the lipid carrier undecaprenyl phosphate, yielding undecaprenyl-pyrophosphoryl-MurNAc-pentapeptide, known as lipid I. This is Phospho-N-acetylmuramoyl-pentapeptide-transferase from Verminephrobacter eiseniae (strain EF01-2).